Here is a 371-residue protein sequence, read N- to C-terminus: Envelope glycoprotein M (371 aa).

The Intravirion segment spans residues 1-13 (MAPSHVDKVNTRT). The helical transmembrane segment at 14–34 (WSASIVFMVLTFVNVSVHLVL) threads the bilayer. Over 35-79 (SNFPHLGYPCVYYHVVDFERLNMSAYNVMHLHTPMLFLDSVQLVC) the chain is Virion surface. The helical transmembrane segment at 80–100 (YAVFMQLVFLAVTIYYLVCWI) threads the bilayer. At 101-126 (KISMRKDKGMSLNQSTRDISYMGDSL) the chain is on the intravirion side. A helical transmembrane segment spans residues 127-147 (TAFLFILSMDTFQLFTLTMSF). Residues 148-151 (RLPS) lie on the Virion surface side of the membrane. Residues 152-172 (MIAFMAAVHFFCLTIFNVSMV) form a helical membrane-spanning segment. The Intravirion portion of the chain corresponds to 173–200 (TQYRSYKRSLFFFSRLHPKLKGTVQFRT). A helical membrane pass occupies residues 201–221 (LIVNLVEVALGFNTTVVAMAL). The Virion surface segment spans residues 222–239 (CYGFGNNFFVRTGHMVLA). A helical membrane pass occupies residues 240–260 (VFVVYAIISIIYFLLIEAVFF). Residues 261–264 (QYVK) are Intravirion-facing. The chain crosses the membrane as a helical span at residues 265–285 (VQFGYHLGAFFGLCGLIYPIV). Topologically, residues 286–298 (QYDTFLSNEYRTG) are virion surface. The helical transmembrane segment at 299-319 (ISWSFGMLFFIWAMFTTCRAV) threads the bilayer. Residues 320–371 (RYFRGRGSGSVKYQALATASGEEVAALSHHDSLESRRLREEEDDDDEDFEDA) lie on the Intravirion side of the membrane. Residues 346–371 (LSHHDSLESRRLREEEDDDDEDFEDA) form a disordered region. The span at 347-359 (SHHDSLESRRLRE) shows a compositional bias: basic and acidic residues. The span at 360-371 (EEDDDDEDFEDA) shows a compositional bias: acidic residues.

This sequence belongs to the herpesviridae glycoprotein M family. As to quaternary structure, interacts (via N-terminus) with gN (via N-terminus). The gM-gN heterodimer forms the gCII complex.

It is found in the virion membrane. Its subcellular location is the host Golgi apparatus. It localises to the host trans-Golgi network. The protein localises to the host endosome membrane. The protein resides in the host nucleus inner membrane. Envelope glycoprotein important for virion assembly and egress. Plays a role in the correct incorporation of gH-gL into virion membrane. Directs the glycoprotein N (gN) to the host trans-Golgi network. This is Envelope glycoprotein M from Homo sapiens (Human).